A 665-amino-acid polypeptide reads, in one-letter code: Auxin response factor 1 (665 aa).

Positions 124 to 226 form a DNA-binding region, TF-B3; sequence FCKTLTASDT…ELRVGVRRHM (103 aa). 3 disordered regions span residues 356–408, 496–542, and 645–665; these read VANS…SVPL, PVPS…RQIR, and KADAEENGNTEGRSSSMAGSR. 3 stretches are compositionally biased toward polar residues: residues 497-519, 530-542, and 651-665; these read VPSNEFDSGQQSEPLNINQSDIP, LRSPQESQSRQIR, and NGNTEGRSSSMAGSR. Residues 542 to 635 enclose the PB1 domain; it reads RSCTKVHMQG…EVKKLSPKNK (94 aa).

It belongs to the ARF family. In terms of assembly, homodimers and heterodimers. Interacts with the auxin-responsive proteins IAA12, IAA13, IAA17 and with ARF2. Binds to RIN13 in the nucleus. As to expression, expressed in the whole plant.

It is found in the nucleus. The protein localises to the cytoplasm. Auxin response factors (ARFs) are transcriptional factors that bind specifically to the DNA sequence 5'-TGTCTC-3' found in the auxin-responsive promoter elements (AuxREs). Seems to act as transcriptional repressor. Formation of heterodimers with Aux/IAA proteins may alter their ability to modulate early auxin response genes expression. Promotes flowering, stamen development, floral organ abscission and fruit dehiscence. Acts as a repressor of IAA2, IAA3 and IAA7. Together with RIN13, promotes leaf senescence and cell death. In Arabidopsis thaliana (Mouse-ear cress), this protein is Auxin response factor 1.